The sequence spans 551 residues: Monocarboxylic acid transporter (551 aa).

13 consecutive transmembrane segments (helical) span residues 18–38 (NPILNISVFVVFIIVTMTVVL), 63–83 (GLAIAGDYLSAASFLGIVGAI), 90–110 (GFLYSIGFFVAWLVALLLVAE), 144–164 (VTLFYLIAQMAGAGSLVSVLL), 171–191 (WQAVVVGIVGIVMIAYVLLGG), 203–223 (AVLLVGGVAIMTVLTFVKVSG), 267–287 (LDFISLALALCLGTAGLPHVL), 307–327 (IVLIGAFYLMTLVLGYGAAAL), 355–375 (IFMALISAVAFATVLAVVAGL), 411–431 (VVIGLISIVLGILAMTQNVAF), 432–452 (LVALAFAVAASANLPTILYSL), 463–483 (VAAIYTGLISALLLIFLSPAV), and 503–523 (NPGLVSIPLAFIAGWIGTLVG).

The protein belongs to the sodium:solute symporter (SSF) (TC 2.A.21) family.

The protein localises to the cell membrane. In terms of biological role, acts as a secondary carrier for acetate, propionate and pyruvate. Has high affinity for acetate and propionate and lower affinity for pyruvate. Driven by the electrochemical proton potential. This chain is Monocarboxylic acid transporter, found in Corynebacterium glutamicum (strain ATCC 13032 / DSM 20300 / JCM 1318 / BCRC 11384 / CCUG 27702 / LMG 3730 / NBRC 12168 / NCIMB 10025 / NRRL B-2784 / 534).